The following is a 347-amino-acid chain: NADH-ubiquinone oxidoreductase chain 2 (347 aa).

11 helical membrane-spanning segments follow: residues 2 to 22, 26 to 46, 60 to 80, 94 to 114, 127 to 147, 151 to 171, 179 to 197, 201 to 223, 242 to 262, 274 to 294, and 325 to 345; these read LSPL…LVTF, SWIL…PLMA, YFIA…LAAW, IILN…PMHF, TGMI…IQIA, NNAF…WGGL, IIAY…MAPF, ITWV…LNTL, MLLL…GFTN, NLVI…FFYT, and LMTM…AIFI.

Belongs to the complex I subunit 2 family.

The protein resides in the mitochondrion inner membrane. The catalysed reaction is a ubiquinone + NADH + 5 H(+)(in) = a ubiquinol + NAD(+) + 4 H(+)(out). Functionally, core subunit of the mitochondrial membrane respiratory chain NADH dehydrogenase (Complex I) that is believed to belong to the minimal assembly required for catalysis. Complex I functions in the transfer of electrons from NADH to the respiratory chain. The immediate electron acceptor for the enzyme is believed to be ubiquinone. This chain is NADH-ubiquinone oxidoreductase chain 2 (MT-ND2), found in Lampetra fluviatilis (European river lamprey).